Consider the following 508-residue polypeptide: Erythropoietin receptor (508 aa).

The N-terminal stretch at Met1–Trp24 is a signal peptide. Topologically, residues Ala25–Pro250 are extracellular. Residues Cys52 and Cys62 are joined by a disulfide bond. The N-linked (GlcNAc...) asparagine glycan is linked to Asn76. An intrachain disulfide couples Cys91 to Cys107. The region spanning Pro148–Asp247 is the Fibronectin type-III domain. An N-linked (GlcNAc...) asparagine glycan is attached at Asn184. A WSXWS motif motif is present at residues Trp233–Ser237. Residues Leu251–Ser273 traverse the membrane as a helical segment. At His274–Ser508 the chain is on the cytoplasmic side. Residue Lys281 forms a Glycyl lysine isopeptide (Lys-Gly) (interchain with G-Cter in ubiquitin) linkage. The short motif at Ile282–Glu290 is the Box 1 motif element. Phosphotyrosine; by JAK2 occurs at positions 368 and 426. Positions Ile452–Leu457 match the ITIM motif motif. A Glycyl lysine isopeptide (Lys-Gly) (interchain with G-Cter in ubiquitin) cross-link involves residue Lys453. Residues Tyr454, Tyr456, Tyr468, Tyr489, and Tyr504 each carry the phosphotyrosine; by JAK2 modification. A disordered region spans residues Asp467–Ser508.

The protein belongs to the type I cytokine receptor family. Type 1 subfamily. Forms homodimers on EPO stimulation. The tyrosine-phosphorylated form interacts with several SH2 domain-containing proteins including LYN, the adapter protein SH2B2, PTPN6, PTPN11, JAK2, PI3 kinases, STAT5A/B, SOCS3, CRKL. Interacts with INPP5D/SHIP1. SH2B2 binding inhibits the JAK-STAT signaling. Interacts with RHEX; this interaction occurs in a erythropoietin (EPO)-dependent manner. Interacts with ATXN2L. Post-translationally, on EPO stimulation, phosphorylated on C-terminal tyrosine residues by JAK2. The phosphotyrosine motifs are also recruitment sites for several SH2-containing proteins and adapter proteins which mediate cell proliferation. Phosphorylation on Tyr-454 is required for PTPN6 interaction, Tyr-426 for PTPN11. Tyr-426 is also required for SOCS3 binding, but Tyr-454/Tyr-456 motif is the preferred binding site. Ubiquitinated by the ECS(SOCS2) complex following ligand-binding and phosphorylation by JAK2, leading to its degradation by the proteasome. Regulation by the ECS(SOCS2) complex acts as a negative feedback loop of erythropoietin-mediated signaling pathway. Ubiquitination at Lys-281 mediates receptor internalization, whereas ubiquitination at Lys-453 promotes trafficking of activated receptors to the lysosomes for degradation. Ubiquitinated by NOSIP; appears to be either multi-monoubiquitinated or polyubiquitinated. Ubiquitination mediates proliferation and survival of EPO-dependent cells.

The protein resides in the cell membrane. In terms of biological role, receptor for erythropoietin, which mediates erythropoietin-induced erythroblast proliferation and differentiation. Upon EPO stimulation, EPOR dimerizes triggering the JAK2/STAT5 signaling cascade. In some cell types, can also activate STAT1 and STAT3. May also activate the LYN tyrosine kinase. Functionally, isoform EPOR-T acts as a dominant-negative receptor of EPOR-mediated signaling. The chain is Erythropoietin receptor (EPOR) from Canis lupus familiaris (Dog).